Consider the following 69-residue polypeptide: DNA gyrase inhibitor YacG (69 aa).

Positions 14, 17, 33, and 37 each coordinate Zn(2+).

The protein belongs to the DNA gyrase inhibitor YacG family. Interacts with GyrB. The cofactor is Zn(2+).

In terms of biological role, inhibits all the catalytic activities of DNA gyrase by preventing its interaction with DNA. Acts by binding directly to the C-terminal domain of GyrB, which probably disrupts DNA binding by the gyrase. In Aliivibrio salmonicida (strain LFI1238) (Vibrio salmonicida (strain LFI1238)), this protein is DNA gyrase inhibitor YacG.